A 335-amino-acid polypeptide reads, in one-letter code: Protein-arginine kinase (335 aa).

A Phosphagen kinase C-terminal domain is found at 20–243 (IVMSSRIRLA…QQIINEEMQI (224 aa)). ATP-binding positions include 23-27 (SSRIR), H81, R114, 165-169 (RASVM), and 196-201 (RGIYGE).

Belongs to the ATP:guanido phosphotransferase family.

It catalyses the reaction L-arginyl-[protein] + ATP = N(omega)-phospho-L-arginyl-[protein] + ADP + H(+). Its function is as follows. Catalyzes the specific phosphorylation of arginine residues in proteins. The polypeptide is Protein-arginine kinase (Staphylococcus haemolyticus (strain JCSC1435)).